Here is a 517-residue protein sequence, read N- to C-terminus: Lysine--tRNA ligase (517 aa).

The disordered stretch occupies residues 1 to 21 (MTEPNRAQAPAQNKAAADTPA). Residues 7 to 20 (AQAPAQNKAAADTP) are compositionally biased toward low complexity. Residues Glu-427 and Glu-434 each coordinate Mg(2+).

Belongs to the class-II aminoacyl-tRNA synthetase family. As to quaternary structure, homodimer. The cofactor is Mg(2+).

Its subcellular location is the cytoplasm. The catalysed reaction is tRNA(Lys) + L-lysine + ATP = L-lysyl-tRNA(Lys) + AMP + diphosphate. The protein is Lysine--tRNA ligase of Cupriavidus taiwanensis (strain DSM 17343 / BCRC 17206 / CCUG 44338 / CIP 107171 / LMG 19424 / R1) (Ralstonia taiwanensis (strain LMG 19424)).